The following is a 206-amino-acid chain: Small ribosomal subunit protein uS4 (206 aa).

The S4 RNA-binding domain occupies Cys-96–Ala-156.

It belongs to the universal ribosomal protein uS4 family. Part of the 30S ribosomal subunit. Contacts protein S5. The interaction surface between S4 and S5 is involved in control of translational fidelity.

Functionally, one of the primary rRNA binding proteins, it binds directly to 16S rRNA where it nucleates assembly of the body of the 30S subunit. With S5 and S12 plays an important role in translational accuracy. This chain is Small ribosomal subunit protein uS4, found in Azotobacter vinelandii (strain DJ / ATCC BAA-1303).